Here is a 397-residue protein sequence, read N- to C-terminus: Enoyl-[acyl-carrier-protein] reductase [NADH] (397 aa).

NAD(+) is bound by residues 48-53 (GASTGY), 74-75 (FE), 111-112 (DA), and 139-140 (VA). Tyrosine 225 is a binding site for substrate. Tyrosine 235 (proton donor) is an active-site residue. NAD(+)-binding positions include lysine 244 and 273 to 275 (VVT).

This sequence belongs to the TER reductase family. Monomer.

The catalysed reaction is a 2,3-saturated acyl-[ACP] + NAD(+) = a (2E)-enoyl-[ACP] + NADH + H(+). The protein operates within lipid metabolism; fatty acid biosynthesis. Functionally, involved in the final reduction of the elongation cycle of fatty acid synthesis (FAS II). Catalyzes the reduction of a carbon-carbon double bond in an enoyl moiety that is covalently linked to an acyl carrier protein (ACP). The chain is Enoyl-[acyl-carrier-protein] reductase [NADH] from Burkholderia pseudomallei (strain 668).